We begin with the raw amino-acid sequence, 252 residues long: Probable transcriptional regulatory protein TW504 (252 aa).

Belongs to the TACO1 family.

It is found in the cytoplasm. This Tropheryma whipplei (strain TW08/27) (Whipple's bacillus) protein is Probable transcriptional regulatory protein TW504.